Here is a 137-residue protein sequence, read N- to C-terminus: Large ribosomal subunit protein uL16c (137 aa).

The protein belongs to the universal ribosomal protein uL16 family. As to quaternary structure, part of the 50S ribosomal subunit.

It is found in the plastid. The protein resides in the chloroplast. This is Large ribosomal subunit protein uL16c from Hordeum vulgare (Barley).